A 258-amino-acid chain; its full sequence is Uroplakin-1a (258 aa).

Topologically, residues 1–14 (MASAAAATTEKGSP) are cytoplasmic. The chain crosses the membrane as a helical span at residues 15-35 (VVVGLLVMGNIIILLSGLALF). The Extracellular segment spans residues 36–59 (AETVWVTADQYRIYPLMGVSGKDD). Residues 60–86 (VFAGAWIAIFCGFSFFVVASFGVGAAL) form a helical membrane-spanning segment. The Cytoplasmic segment spans residues 87 to 91 (CRRRS). The helical transmembrane segment at 92-112 (MILTYLILMLIIYIFECASCI) threads the bilayer. Over 113-230 (TSYTHRDYMV…HIGHAIDSYT (118 aa)) the chain is Extracellular. A glycan (N-linked (GlcNAc...) asparagine) is linked at Asn170. Residues 231–252 (WGISWFGFAILMWTLPVMLIAM) traverse the membrane as a helical segment. The Cytoplasmic segment spans residues 253–258 (YFYTTL).

This sequence belongs to the tetraspanin (TM4SF) family. As to quaternary structure, homodimer; disulfide-linked. Interacts with uroplakin-2 (UPK2). The N-terminus is blocked. In terms of processing, N-glycosylated with high-mannose oligosaccharides. In terms of tissue distribution, bladder epithelium.

The protein localises to the membrane. Functionally, component of the asymmetric unit membrane (AUM); a highly specialized biomembrane elaborated by terminally differentiated urothelial cells. May play an important role in normal bladder epithelial physiology, possibly in regulating membrane permeability of superficial umbrella cells or in stabilizing the apical membrane through AUM/cytoskeletal interactions. The sequence is that of Uroplakin-1a (UPK1A) from Bos taurus (Bovine).